The chain runs to 467 residues: DNA polymerase IV (467 aa).

The region spanning Val5–Gly187 is the UmuC domain. Asp9 and Asp104 together coordinate Mg(2+). Glu105 is an active-site residue. 2 disordered regions span residues Pro364 to Val383 and Lys429 to Asp449.

The protein belongs to the DNA polymerase type-Y family. Monomer. The cofactor is Mg(2+).

Its subcellular location is the cytoplasm. It carries out the reaction DNA(n) + a 2'-deoxyribonucleoside 5'-triphosphate = DNA(n+1) + diphosphate. Functionally, poorly processive, error-prone DNA polymerase involved in untargeted mutagenesis. Copies undamaged DNA at stalled replication forks, which arise in vivo from mismatched or misaligned primer ends. These misaligned primers can be extended by PolIV. Exhibits no 3'-5' exonuclease (proofreading) activity. May be involved in translesional synthesis, in conjunction with the beta clamp from PolIII. The chain is DNA polymerase IV from Corynebacterium glutamicum (strain ATCC 13032 / DSM 20300 / JCM 1318 / BCRC 11384 / CCUG 27702 / LMG 3730 / NBRC 12168 / NCIMB 10025 / NRRL B-2784 / 534).